The chain runs to 159 residues: Biogenesis of lysosome-related organelles complex 1 subunit 2 (159 aa).

The disordered stretch occupies residues 1 to 37; it reads MDKPTTSAAAAAAQDSNLLPDSPQHGPTLSSASSFEA. A compositionally biased stretch (polar residues) spans 14–36; the sequence is QDSNLLPDSPQHGPTLSSASSFE. Positions 69 to 134 form a coiled coil; it reads EDYKLLEEMN…KLEAAAYKLD (66 aa).

Belongs to the BLOC1S2 family. Homodimer. Component of the biogenesis of lysosome-related organelles complex-1 (BLOC-1) composed of Blos1, Blos2, Blos3, Blos4, Dysb, Muted, Pldn and Snapin. Interacts with Snapin.

Its function is as follows. Component of the biogenesis of lysosome-related organelles complex-1 (BLOC-1) involved in pigment granule biogenesis. The polypeptide is Biogenesis of lysosome-related organelles complex 1 subunit 2 (Drosophila melanogaster (Fruit fly)).